An 88-amino-acid polypeptide reads, in one-letter code: Yop proteins translocation protein S (88 aa).

Transmembrane regions (helical) follow at residues 15 to 35 (WLVL…GTLV) and 49 to 69 (LGFV…ASWL).

It belongs to the FliQ/MopD/SpaQ family.

It is found in the cell membrane. Its function is as follows. Component of the Yop secretion machinery. The protein is Yop proteins translocation protein S (yscS) of Yersinia pestis.